A 362-amino-acid polypeptide reads, in one-letter code: D-alanine--D-alanine ligase (362 aa).

In terms of domain architecture, ATP-grasp spans 134–345 (KILAQRAGVP…YPDLITRLIR (212 aa)). Position 170 to 225 (170 to 225 (GQLGTSNLFVKPSNQGSSVGITHVTDDSNYAEALAEAFKYDDKVLVEEGIVGTEVE)) interacts with ATP. Residues Asp-298, Glu-312, and Asn-314 each contribute to the Mg(2+) site.

The protein belongs to the D-alanine--D-alanine ligase family. Mg(2+) is required as a cofactor. Requires Mn(2+) as cofactor.

The protein localises to the cytoplasm. It carries out the reaction 2 D-alanine + ATP = D-alanyl-D-alanine + ADP + phosphate + H(+). It participates in cell wall biogenesis; peptidoglycan biosynthesis. Cell wall formation. This is D-alanine--D-alanine ligase from Lactobacillus delbrueckii subsp. bulgaricus (strain ATCC BAA-365 / Lb-18).